Here is a 205-residue protein sequence, read N- to C-terminus: Ephrin-A1 (205 aa).

Residues 1-18 (MEFLWAPLLGLCCSLAAA) form the signal peptide. In terms of domain architecture, Ephrin RBD spans 19 to 151 (DRHTVFWNSS…KLKVTVSGKI (133 aa)). An N-linked (GlcNAc...) asparagine glycan is attached at N26. Intrachain disulfides connect C51–C92 and C80–C140. A lipid anchor (GPI-anchor amidated serine) is attached at S182. A propeptide spans 183–205 (AAPRLSPLAWAVLLLPFLLLQTS) (removed in mature form).

Belongs to the ephrin family. Monomer. Homodimer. Forms heterodimers with EPHA2. Binds to the receptor tyrosine kinases EPHA2, EPHA3, EPHA4, EPHA5, EPHA6 and EPHA7. Also binds with low affinity to EPHA1. In terms of processing, undergoes proteolysis by a metalloprotease to give rise to a soluble monomeric form. Post-translationally, N-Glycosylation is required for binding to EPHA2 receptor and inducing its internalization.

The protein localises to the cell membrane. It is found in the secreted. Its function is as follows. Cell surface GPI-bound ligand for Eph receptors, a family of receptor tyrosine kinases which are crucial for migration, repulsion and adhesion during neuronal, vascular and epithelial development. Binds promiscuously Eph receptors residing on adjacent cells, leading to contact-dependent bidirectional signaling into neighboring cells. Plays an important role in angiogenesis and tumor neovascularization. The recruitment of VAV2, VAV3 and PI3-kinase p85 subunit by phosphorylated EPHA2 is critical for EFNA1-induced RAC1 GTPase activation and vascular endothelial cell migration and assembly. Exerts anti-oncogenic effects in tumor cells through activation and down-regulation of EPHA2. Activates EPHA2 by inducing tyrosine phosphorylation which leads to its internalization and degradation. Acts as a negative regulator in the tumorigenesis of gliomas by down-regulating EPHA2 and FAK. Can evoke collapse of embryonic neuronal growth cone and regulates dendritic spine morphogenesis. This chain is Ephrin-A1 (EFNA1), found in Sus scrofa (Pig).